A 65-amino-acid polypeptide reads, in one-letter code: Large ribosomal subunit protein bL35 (65 aa).

Residues 1–30 (MPKMKTNRGAAKRFRKTASGRFKSKQSHLR) form a disordered region. Residues 10 to 30 (AAKRFRKTASGRFKSKQSHLR) show a composition bias toward basic residues.

This sequence belongs to the bacterial ribosomal protein bL35 family.

The sequence is that of Large ribosomal subunit protein bL35 from Pseudoalteromonas atlantica (strain T6c / ATCC BAA-1087).